Consider the following 201-residue polypeptide: Kunitz type trypsin inhibitor 104 (201 aa).

Positions 1 to 24 (MSTRSLTIFILAHVWLLMATTSIA) are cleaved as a signal peptide. 3 cysteine pairs are disulfide-bonded: Cys63–Cys110, Cys161–Cys173, and Cys166–Cys169.

Belongs to the protease inhibitor I3 (leguminous Kunitz-type inhibitor) family. In terms of assembly, interacts with CP.

Its subcellular location is the secreted. It localises to the extracellular space. The protein localises to the apoplast. In terms of biological role, protease inhibitor involved in the control of mycorrhiza establishment and arbuscule development during root colonization by arbuscular mycorrhizal (AM) fungi (e.g. Rhizophagus irregularis). The chain is Kunitz type trypsin inhibitor 104 from Medicago truncatula (Barrel medic).